A 61-amino-acid chain; its full sequence is Small ribosomal subunit protein uS14 (61 aa).

Zn(2+) contacts are provided by cysteine 24, cysteine 27, cysteine 40, and cysteine 43.

This sequence belongs to the universal ribosomal protein uS14 family. Zinc-binding uS14 subfamily. In terms of assembly, part of the 30S ribosomal subunit. Contacts proteins S3 and S10. Zn(2+) is required as a cofactor.

Functionally, binds 16S rRNA, required for the assembly of 30S particles and may also be responsible for determining the conformation of the 16S rRNA at the A site. The polypeptide is Small ribosomal subunit protein uS14 (Ruminiclostridium cellulolyticum (strain ATCC 35319 / DSM 5812 / JCM 6584 / H10) (Clostridium cellulolyticum)).